A 1115-amino-acid polypeptide reads, in one-letter code: Carbamoyl phosphate synthase large chain (1115 aa).

Positions 1–407 (MPRRTDLHHV…ALGKVMRSLE (407 aa)) are carboxyphosphate synthetic domain. The ATP site is built by Arg134, Arg174, Gly180, Gly181, Glu213, Ile215, Glu220, Gly246, Val247, His248, Gln290, and Glu304. An ATP-grasp 1 domain is found at 138–333 (KDIVAKAGGE…IAKIAAKLAI (196 aa)). The Mg(2+) site is built by Gln290, Glu304, and Asn306. Positions 290, 304, and 306 each coordinate Mn(2+). The oligomerization domain stretch occupies residues 408–559 (TTRAGFWTAP…ELDPAAETEV (152 aa)). Residues 560 to 965 (APQTERPKVL…AFAKSQTAAY (406 aa)) are carbamoyl phosphate synthetic domain. Residues 693–884 (GDLLSAAGLP…LAKACARIML (192 aa)) form the ATP-grasp 2 domain. Residues Arg729, Arg768, Leu770, Glu775, Gly800, Ile801, His802, Ser803, Gln843, and Glu855 each contribute to the ATP site. Residues Gln843, Glu855, and Asn857 each contribute to the Mg(2+) site. 3 residues coordinate Mn(2+): Gln843, Glu855, and Asn857. The 148-residue stretch at 966–1113 (GSLPAQGTVF…QELHRVIGGV (148 aa)) folds into the MGS-like domain. Positions 966–1115 (GSLPAQGTVF…LHRVIGGVER (150 aa)) are allosteric domain.

Belongs to the CarB family. In terms of assembly, composed of two chains; the small (or glutamine) chain promotes the hydrolysis of glutamine to ammonia, which is used by the large (or ammonia) chain to synthesize carbamoyl phosphate. Tetramer of heterodimers (alpha,beta)4. The cofactor is Mg(2+). Requires Mn(2+) as cofactor.

The enzyme catalyses hydrogencarbonate + L-glutamine + 2 ATP + H2O = carbamoyl phosphate + L-glutamate + 2 ADP + phosphate + 2 H(+). The catalysed reaction is hydrogencarbonate + NH4(+) + 2 ATP = carbamoyl phosphate + 2 ADP + phosphate + 2 H(+). It participates in amino-acid biosynthesis; L-arginine biosynthesis; carbamoyl phosphate from bicarbonate: step 1/1. Its pathway is pyrimidine metabolism; UMP biosynthesis via de novo pathway; (S)-dihydroorotate from bicarbonate: step 1/3. Large subunit of the glutamine-dependent carbamoyl phosphate synthetase (CPSase). CPSase catalyzes the formation of carbamoyl phosphate from the ammonia moiety of glutamine, carbonate, and phosphate donated by ATP, constituting the first step of 2 biosynthetic pathways, one leading to arginine and/or urea and the other to pyrimidine nucleotides. The large subunit (synthetase) binds the substrates ammonia (free or transferred from glutamine from the small subunit), hydrogencarbonate and ATP and carries out an ATP-coupled ligase reaction, activating hydrogencarbonate by forming carboxy phosphate which reacts with ammonia to form carbamoyl phosphate. This is Carbamoyl phosphate synthase large chain from Mycobacterium tuberculosis (strain CDC 1551 / Oshkosh).